A 101-amino-acid chain; its full sequence is uncharacterized protein (101 aa).

A helical transmembrane segment spans residues 17–37 (VIKILLISGISRIIILILAMF).

The protein localises to the endoplasmic reticulum membrane. This is an uncharacterized protein from Schizosaccharomyces pombe (strain 972 / ATCC 24843) (Fission yeast).